Here is a 335-residue protein sequence, read N- to C-terminus: UPF0353 protein MAP_1207 (335 aa).

A run of 2 helical transmembrane segments spans residues 18 to 38 (WFFL…LMQL) and 67 to 87 (LPAI…AGPT). A VWFA domain is found at 98-294 (VVMLVIDVSQ…QELKSVYATL (197 aa)). The helical transmembrane segment at 309 to 329 (VGWVRLGALVLALAALTALLI) threads the bilayer.

Belongs to the UPF0353 family.

It is found in the cell membrane. The sequence is that of UPF0353 protein MAP_1207 from Mycolicibacterium paratuberculosis (strain ATCC BAA-968 / K-10) (Mycobacterium paratuberculosis).